The following is a 1426-amino-acid chain: MNDWHRIFTQNVLVPPHPQRARQPWKESTAFQCVLKWLDGPVIRQGVLEVLSEVECHLRVSFFDVTYRHFFGRTWKTTVKPTKRPPSRIVFNEPLYFHTSLNHPHIVAVVEVVAEGKKRDGSLQTLSCGFGILRIFSNQPDSPISASQDKRLRLYHGTPRALLHPLLQDPAEQNRHMTLIENCSLQYTLKPHPALEPAFHLLPENLLVSGLQQIPGLLPAHGESGDALRKPRLQKPITGHLDDLFFTLYPSLEKFEEELLELHVQDHFQEGCGPLDGGALEILERRLRVGVHNGLGFVQRPQVVVLVPEMDVALTRSASFSRKVVSSSKTSSGSQALVLRSRLRLPEMVGHPAFAVIFQLEYVFSSPAGVDGNAASVTSLSNLACMHMVRWAVWNPLLEADSGRVTLPLQGGIQPNPSHCLVYKVPSASMSSEEVKQVESGTLRFQFSLGSEEHLDAPTEPVSGPKVERRPSRKPPTSPSSPPAPVPRVLAAPQNSPVGPGLSISQLAASPRSPTQHCLARPTSQLPHGSQASPAQAQEFPLEAGISHLEADLSQTSLVLETSIAEQLQELPFTPLHAPIVVGTQTRSSAGQPSRASMVLLQSSGFPEILDANKQPAEAVSATEPVTFNPQKEESDCLQSNEMVLQFLAFSRVAQDCRGTSWPKTVYFTFQFYRFPPATTPRLQLVQLDEAGQPSSGALTHILVPVSRDGTFDAGSPGFQLRYMVGPGFLKPGERRCFARYLAVQTLQIDVWDGDSLLLIGSAAVQMKHLLRQGRPAVQASHELEVVATEYEQDNMVVSGDMLGFGRVKPIGVHSVVKGRLHLTLANVGHPCEQKVRGCSTLPPSRSRVISNDGASRFSGGSLLTTGSSRRKHVVQAQKLADVDSELAAMLLTHARQGKGPQDVSRESDATRRRKLERMRSVRLQEAGGDLGRRGTSVLAQQSVRTQHLRDLQVIAAYRERTKAESIASLLSLAITTEHTLHATLGVAEFFEFVLKNPHNTQHTVTVEIDNPELSVIVDSQEWRDFKGAAGLHTPVEEDMFHLRGSLAPQLYLRPHETAHVPFKFQSFSAGQLAMVQASPGLSNEKGMDAVSPWKSSAVPTKHAKVLFRASGGKPIAVLCLTVELQPHVVDQVFRFYHPELSFLKKAIRLPPWHTFPGAPVGMLGEDPPVHVRCSDPNVICETQNVGPGEPRDIFLKVASGPSPEIKDFFVIIYSDRWLATPTQTWQVYLHSLQRVDVSCVAGQLTRLSLVLRGTQTVRKVRAFTSHPQELKTDPKGVFVLPPRGVQDLHVGVRPLRAGSRFVHLNLVDVDCHQLVASWLVCLCCRQPLISKAFEIMLAAGEGKGVNKRITYTNPYPSRRTFHLHSDHPELLRFREDSFQVGGGETYTIGLQFAPSQRVGEEEILIYINDHEDKNEEAFCVKVIYQ.

Serine 142 bears the Phosphoserine mark. 2 disordered regions span residues 450-536 (GSEE…SPAQ) and 896-935 (RQGK…GRRG). Residues 474-486 (KPPTSPSSPPAPV) are compositionally biased toward pro residues. Polar residues predominate over residues 503–536 (SISQLAASPRSPTQHCLARPTSQLPHGSQASPAQ). The segment at 823–1426 (LTLANVGHPC…EAFCVKVIYQ (604 aa)) is sufficient for basal bodies localization.

This sequence belongs to the NPHP4 family. In terms of assembly, interacts with NPHP1. Interacts with NPHP1 and RPGRIP1L/NPHP8; NPHP1, NPHP4 and RPGRIP1L are proposed to form a functional NPHP1-4-8 module localized to cell-cell contacts and the ciliary transition zone; NPHP4 mediates the interaction between NPHP1 and RPGRIP1L. Interacts with IQCB1/NPHP5; the interaction likely requires additional interactors. Interacts with RPGRIP1, CEP164, JADE1, PALS1, INADL, PARD6A, INVS, DVL2, LATS1. Interacts with INTU; INTU mediates the interaction between NPHP4 and DAAM1. Interacts with SPATA7. Expressed in kidney, skeletal muscle, heart and liver, and to a lesser extent in brain and lung.

The protein localises to the cytoplasm. The protein resides in the cytoskeleton. It localises to the cilium basal body. Its subcellular location is the microtubule organizing center. It is found in the centrosome. The protein localises to the cell junction. The protein resides in the tight junction. It localises to the nucleus. Its function is as follows. Involved in the organization of apical junctions; the function is proposed to implicate a NPHP1-4-8 module. Does not seem to be strictly required for ciliogenesis. Required for building functional cilia. Involved in the organization of the subapical actin network in multiciliated epithelial cells. Seems to recruit INT to basal bodies of motile cilia which subsequently interacts with actin-modifying proteins such as DAAM1. In cooperation with INVS may down-regulate the canonical Wnt pathway and promote the Wnt-PCP pathway by regulating expression and subcellular location of disheveled proteins. Stabilizes protein levels of JADE1 and promotes its translocation to the nucleus leading to cooperative inhibition of canonical Wnt signaling. Acts as a negative regulator of the hippo pathway by association with LATS1 and modifying LATS1-dependent phosphorylation and localization of WWTR1/TAZ. In Homo sapiens (Human), this protein is Nephrocystin-4 (NPHP4).